The chain runs to 166 residues: Interferon gamma (166 aa).

Residues 1 to 23 form the signal peptide; sequence MKYTSYILAFQLCIVLGSLGCYC. Gln24 is subject to Pyrrolidone carboxylic acid. N-linked (GlcNAc...) asparagine glycans are attached at residues Asn48, Asn86, and Asn120.

This sequence belongs to the type II (or gamma) interferon family. As to quaternary structure, homodimer. Interacts with IFNGR1 (via extracellular domain); this interaction promotes IFNGR1 dimerization. As to expression, released primarily from activated T lymphocytes.

Its subcellular location is the secreted. Functionally, type II interferon produced by immune cells such as T-cells and NK cells that plays crucial roles in antimicrobial, antiviral, and antitumor responses by activating effector immune cells and enhancing antigen presentation. Primarily signals through the JAK-STAT pathway after interaction with its receptor IFNGR1 to affect gene regulation. Upon IFNG binding, IFNGR1 intracellular domain opens out to allow association of downstream signaling components JAK2, JAK1 and STAT1, leading to STAT1 activation, nuclear translocation and transcription of IFNG-regulated genes. Many of the induced genes are transcription factors such as IRF1 that are able to further drive regulation of a next wave of transcription. Plays a role in class I antigen presentation pathway by inducing a replacement of catalytic proteasome subunits with immunoproteasome subunits. In turn, increases the quantity, quality, and repertoire of peptides for class I MHC loading. Increases the efficiency of peptide generation also by inducing the expression of activator PA28 that associates with the proteasome and alters its proteolytic cleavage preference. Up-regulates as well MHC II complexes on the cell surface by promoting expression of several key molecules such as cathepsins B/CTSB, H/CTSH, and L/CTSL. Participates in the regulation of hematopoietic stem cells during development and under homeostatic conditions by affecting their development, quiescence, and differentiation. This is Interferon gamma (IFNG) from Saimiri sciureus (Common squirrel monkey).